A 408-amino-acid chain; its full sequence is uncharacterized protein (408 aa).

4Fe-4S ferredoxin-type domains follow at residues 42–72 (IPPIVKFPEKCISCEGCKESCPAFAIEMIYN), 78–107 (KLPVIDEGSCVACANCIEVCPTGVLEMDKH), 122–151 (SNLIIDEEVCVRCGNCERACPINVIERKEG), 151–181 (GKYVINMALCISCKECIKVCPIENAIVVVDE), 212–241 (KIPHIVSGLCVSCGICKDVCVGEIDLNEKK), 233–265 (GEIDLNEKKVVECVKCGLCIEVCSTTAIRIYKP), 273–302 (ICYVIDEDLCIGCRICQKVCGSGAIKISKE), and 304–333 (KLPYIVPELCVRGGACARECPVGAIKVVKP). [4Fe-4S] cluster is bound by residues Cys-52, Cys-55, Cys-58, Cys-62, Cys-87, Cys-90, Cys-93, Cys-97, Cys-131, Cys-134, Cys-137, Cys-141, Cys-160, Cys-163, Cys-166, and Cys-170. Residues Cys-282, Cys-285, Cys-288, and Cys-292 each contribute to the [4Fe-4S] cluster site.

This is an uncharacterized protein from Methanocaldococcus jannaschii (strain ATCC 43067 / DSM 2661 / JAL-1 / JCM 10045 / NBRC 100440) (Methanococcus jannaschii).